The chain runs to 283 residues: Protoheme IX farnesyltransferase (283 aa).

A run of 9 helical transmembrane segments spans residues 6-26, 35-55, 85-105, 106-126, 131-151, 160-180, 207-227, 230-250, and 262-282; these read LLLT…AGFL, FGLF…GCVF, AIVF…FYTN, LLTL…YSIW, VYGT…GYCA, AFIL…SIAI, ILLY…FHFT, LYLI…LRGL, and MFRF…FDLV.

The protein belongs to the UbiA prenyltransferase family. Protoheme IX farnesyltransferase subfamily.

It localises to the cell inner membrane. It catalyses the reaction heme b + (2E,6E)-farnesyl diphosphate + H2O = Fe(II)-heme o + diphosphate. It functions in the pathway porphyrin-containing compound metabolism; heme O biosynthesis; heme O from protoheme: step 1/1. Functionally, converts heme B (protoheme IX) to heme O by substitution of the vinyl group on carbon 2 of heme B porphyrin ring with a hydroxyethyl farnesyl side group. In Protochlamydia amoebophila (strain UWE25), this protein is Protoheme IX farnesyltransferase.